Here is a 428-residue protein sequence, read N- to C-terminus: Adenylosuccinate synthetase (428 aa).

GTP is bound by residues 11 to 17 and 39 to 41; these read GDEGKGK and GHT. The active-site Proton acceptor is Asp-12. Residues Asp-12 and Gly-39 each contribute to the Mg(2+) site. IMP is bound by residues 12-15, 37-40, Thr-130, Arg-144, Asn-226, Thr-241, and Arg-305; these read DEGK and NAGH. The active-site Proton donor is the His-40. A substrate-binding site is contributed by 301-307; that stretch reads VTTGRKR. GTP-binding positions include Arg-307, 333 to 335, and 415 to 417; these read KLD and GTG.

It belongs to the adenylosuccinate synthetase family. Homodimer. Mg(2+) is required as a cofactor.

Its subcellular location is the cytoplasm. The enzyme catalyses IMP + L-aspartate + GTP = N(6)-(1,2-dicarboxyethyl)-AMP + GDP + phosphate + 2 H(+). Its pathway is purine metabolism; AMP biosynthesis via de novo pathway; AMP from IMP: step 1/2. Functionally, plays an important role in the de novo pathway and in the salvage pathway of purine nucleotide biosynthesis. Catalyzes the first committed step in the biosynthesis of AMP from IMP. This Komagataella phaffii (strain GS115 / ATCC 20864) (Yeast) protein is Adenylosuccinate synthetase.